The chain runs to 445 residues: tRNA-2-methylthio-N(6)-dimethylallyladenosine synthase (445 aa).

One can recognise an MTTase N-terminal domain in the interval 9 to 125; the sequence is LKYRILTYGC…LPYLIARAKE (117 aa). Residues Cys-18, Cys-54, Cys-88, Cys-162, Cys-166, and Cys-169 each contribute to the [4Fe-4S] cluster site. The region spanning 148–378 is the Radical SAM core domain; sequence RKPGLSAFVN…NRRQYQIATE (231 aa). In terms of domain architecture, TRAM spans 381 to 444; it reads QELQGSIQEV…TFSLFGEIFN (64 aa).

Belongs to the methylthiotransferase family. MiaB subfamily. In terms of assembly, monomer. The cofactor is [4Fe-4S] cluster.

It localises to the cytoplasm. The enzyme catalyses N(6)-dimethylallyladenosine(37) in tRNA + (sulfur carrier)-SH + AH2 + 2 S-adenosyl-L-methionine = 2-methylsulfanyl-N(6)-dimethylallyladenosine(37) in tRNA + (sulfur carrier)-H + 5'-deoxyadenosine + L-methionine + A + S-adenosyl-L-homocysteine + 2 H(+). In terms of biological role, catalyzes the methylthiolation of N6-(dimethylallyl)adenosine (i(6)A), leading to the formation of 2-methylthio-N6-(dimethylallyl)adenosine (ms(2)i(6)A) at position 37 in tRNAs that read codons beginning with uridine. The sequence is that of tRNA-2-methylthio-N(6)-dimethylallyladenosine synthase from Syntrophomonas wolfei subsp. wolfei (strain DSM 2245B / Goettingen).